Reading from the N-terminus, the 551-residue chain is FGGY carbohydrate kinase domain-containing protein (551 aa).

Belongs to the FGGY kinase family. As to expression, expressed in kidney, lung and small intestine and to a lower extent in liver and detected in cerebrospinal fluid (at protein level).

It carries out the reaction D-ribulose + ATP = D-ribulose 5-phosphate + ADP + H(+). It participates in carbohydrate metabolism; pentose and glucuronate interconversion. Its function is as follows. Catalyzes ATP-dependent phosphorylation of D-ribulose at C-5 to form D-ribulose 5-phosphate. Postulated to function in a metabolite repair mechanism by preventing toxic accumulation of free D-ribulose formed by non-specific phosphatase activities. Alternatively, may play a role in regulating D-ribulose 5-phosphate recycling in the pentose phosphate pathway. Can phosphorylate ribitol with low efficiency. The polypeptide is FGGY carbohydrate kinase domain-containing protein (Homo sapiens (Human)).